A 266-amino-acid polypeptide reads, in one-letter code: Thiazole synthase (266 aa).

Residue Lys-107 is the Schiff-base intermediate with DXP of the active site. 1-deoxy-D-xylulose 5-phosphate is bound by residues Gly-168, 194–195 (AG), and 216–217 (NT).

The protein belongs to the ThiG family. Homotetramer. Forms heterodimers with either ThiH or ThiS.

It is found in the cytoplasm. It catalyses the reaction [ThiS sulfur-carrier protein]-C-terminal-Gly-aminoethanethioate + 2-iminoacetate + 1-deoxy-D-xylulose 5-phosphate = [ThiS sulfur-carrier protein]-C-terminal Gly-Gly + 2-[(2R,5Z)-2-carboxy-4-methylthiazol-5(2H)-ylidene]ethyl phosphate + 2 H2O + H(+). Its pathway is cofactor biosynthesis; thiamine diphosphate biosynthesis. In terms of biological role, catalyzes the rearrangement of 1-deoxy-D-xylulose 5-phosphate (DXP) to produce the thiazole phosphate moiety of thiamine. Sulfur is provided by the thiocarboxylate moiety of the carrier protein ThiS. In vitro, sulfur can be provided by H(2)S. This is Thiazole synthase from Azorhizobium caulinodans (strain ATCC 43989 / DSM 5975 / JCM 20966 / LMG 6465 / NBRC 14845 / NCIMB 13405 / ORS 571).